The chain runs to 194 residues: Imidazoleglycerol-phosphate dehydratase (194 aa).

Belongs to the imidazoleglycerol-phosphate dehydratase family.

The protein resides in the cytoplasm. The enzyme catalyses D-erythro-1-(imidazol-4-yl)glycerol 3-phosphate = 3-(imidazol-4-yl)-2-oxopropyl phosphate + H2O. The protein operates within amino-acid biosynthesis; L-histidine biosynthesis; L-histidine from 5-phospho-alpha-D-ribose 1-diphosphate: step 6/9. This chain is Imidazoleglycerol-phosphate dehydratase, found in Bacillus cereus (strain G9842).